The sequence spans 463 residues: Glycine--tRNA ligase (463 aa).

Residue R102 participates in substrate binding. The tract at residues 113-134 is disordered; the sequence is KHGHPPPNGLADIRDPDTGEPG. E165 provides a ligand contact to substrate. ATP is bound by residues 197–199, 207–212, 284–285, and 328–331; these read RNE, FRTREF, EL, and GLTR. 212–216 lines the substrate pocket; sequence FEQME. Residue 324–328 participates in substrate binding; that stretch reads EPAAG.

It belongs to the class-II aminoacyl-tRNA synthetase family. As to quaternary structure, homodimer.

The protein localises to the cytoplasm. The enzyme catalyses tRNA(Gly) + glycine + ATP = glycyl-tRNA(Gly) + AMP + diphosphate. Catalyzes the attachment of glycine to tRNA(Gly). In Mycolicibacterium paratuberculosis (strain ATCC BAA-968 / K-10) (Mycobacterium paratuberculosis), this protein is Glycine--tRNA ligase.